Here is a 384-residue protein sequence, read N- to C-terminus: Putative 8-amino-7-oxononanoate synthase (384 aa).

Arginine 22 serves as a coordination point for substrate. Pyridoxal 5'-phosphate is bound at residue 109–110 (GY). Residue histidine 134 participates in substrate binding. Residues serine 182, 207-210 (DDAH), and 236-239 (TLSK) each bind pyridoxal 5'-phosphate. Lysine 239 is subject to N6-(pyridoxal phosphate)lysine. A substrate-binding site is contributed by threonine 348.

Belongs to the class-II pyridoxal-phosphate-dependent aminotransferase family. BioF subfamily. Homodimer. Pyridoxal 5'-phosphate is required as a cofactor.

It catalyses the reaction 6-carboxyhexanoyl-[ACP] + L-alanine + H(+) = (8S)-8-amino-7-oxononanoate + holo-[ACP] + CO2. It participates in cofactor biosynthesis; biotin biosynthesis. Its function is as follows. Catalyzes the decarboxylative condensation of pimeloyl-[acyl-carrier protein] and L-alanine to produce 8-amino-7-oxononanoate (AON), [acyl-carrier protein], and carbon dioxide. The chain is Putative 8-amino-7-oxononanoate synthase (bioF) from Caulobacter vibrioides (strain ATCC 19089 / CIP 103742 / CB 15) (Caulobacter crescentus).